A 171-amino-acid polypeptide reads, in one-letter code: Adenine phosphoribosyltransferase (171 aa).

This sequence belongs to the purine/pyrimidine phosphoribosyltransferase family. In terms of assembly, homodimer.

It is found in the cytoplasm. It catalyses the reaction AMP + diphosphate = 5-phospho-alpha-D-ribose 1-diphosphate + adenine. It participates in purine metabolism; AMP biosynthesis via salvage pathway; AMP from adenine: step 1/1. Functionally, catalyzes a salvage reaction resulting in the formation of AMP, that is energically less costly than de novo synthesis. This is Adenine phosphoribosyltransferase from Gloeobacter violaceus (strain ATCC 29082 / PCC 7421).